The primary structure comprises 393 residues: Upstream-binding factor 1-like protein 1 (393 aa).

DNA-binding regions (HMG box) lie at residues 100-168 (PKRP…ARFR) and 222-288 (QKPP…DLWL). A disordered region spans residues 308 to 393 (KNMAMTGGPD…SSGEEIEVDV (86 aa)). Residues 365-377 (EENRKKDREKEES) show a composition bias toward basic and acidic residues.

It is found in the cytoplasm. The protein localises to the nucleus. Its function is as follows. Essential for proliferation of the inner cell mass and trophectodermal cells in peri-implantation development. The sequence is that of Upstream-binding factor 1-like protein 1 from Homo sapiens (Human).